A 256-amino-acid polypeptide reads, in one-letter code: 3-isopropylmalate dehydratase small subunit 2 (256 aa).

Residues 1 to 59 constitute a chloroplast transit peptide; it reads MAYSLPTFPQALPCSSTKTSSSLATFRSPFLRFNGSTSLIPSSISITSRGTSSPTIIPR.

The protein belongs to the LeuD family. In terms of assembly, heterodimer of the large LEUC/IIL1 subunit and the small LEUD (SSU1, SSU2 or SSU3) subunits. Expressed in vascular bundles of roots, cotyledons and rosette leaves. Expressed in stem vascular bundles which branche off into lateral inflorescences. Expressed in connective tissues in anthers. In young seedlings, expressed in cotyledon epidermal cells and vasculare bundles. In hypocotyls, expressed in parenchyma cells surrounding the vasculature and further peripheral cells. In seedling roots, expressed in cells along the vasculature. In roots of adult plants, expressed in cells closely associated with the stele. In flowering stalks, expressed in parenchyma cells associated with the phloem or the xylem. Expressed in the vasculature of sepals and petals.

Its subcellular location is the plastid. It is found in the chloroplast stroma. It carries out the reaction (2R,3S)-3-isopropylmalate = (2S)-2-isopropylmalate. The catalysed reaction is a 2-(omega-methylsulfanyl)alkylmalate = a 2-(omega-methylsulfanyl)alkylmaleate + H2O. The enzyme catalyses 2-(3-methylsulfanyl)propylmalate = 2-(2-methylsulfanyl)propylmaleate + H2O. It catalyses the reaction a 3-(omega-methylsulfanyl)alkylmalate = a 2-(omega-methylsulfanyl)alkylmaleate + H2O. It carries out the reaction 2-(2-methylsulfanyl)ethylmalate = 2-(2-methylsulfanyl)ethylmaleate + H2O. The catalysed reaction is 3-(2-methylsulfanyl)ethylmalate = 2-(2-methylsulfanyl)ethylmaleate + H2O. The enzyme catalyses 3-(3-methylsulfanyl)propylmalate = 2-(2-methylsulfanyl)propylmaleate + H2O. The protein operates within amino-acid biosynthesis; L-leucine biosynthesis; L-leucine from 3-methyl-2-oxobutanoate: step 2/4. Functionally, catalyzes the isomerization between 2-isopropylmalate and 3-isopropylmalate, via the formation of 2-isopropylmaleate. Functions redundantly with LEUD2 in the methionine chain elongation pathway of aliphatic glucosinolate formation. The protein is 3-isopropylmalate dehydratase small subunit 2 of Arabidopsis thaliana (Mouse-ear cress).